Here is a 365-residue protein sequence, read N- to C-terminus: D-alanine--D-alanine ligase (365 aa).

One can recognise an ATP-grasp domain in the interval 135–345 (KLLLKSFNIP…YGSLVDKLIA (211 aa)). 168-223 (KQSLDYPVIVKPAMLGSSIGISIAYNETQIEKCIEEAFAYDLTVVIEKFMRAREIE) provides a ligand contact to ATP. The Mg(2+) site is built by Asp-298, Glu-312, and Asn-314.

The protein belongs to the D-alanine--D-alanine ligase family. It depends on Mg(2+) as a cofactor. Mn(2+) is required as a cofactor.

The protein localises to the cytoplasm. It carries out the reaction 2 D-alanine + ATP = D-alanyl-D-alanine + ADP + phosphate + H(+). It participates in cell wall biogenesis; peptidoglycan biosynthesis. Functionally, cell wall formation. The protein is D-alanine--D-alanine ligase of Borrelia turicatae (strain 91E135).